Reading from the N-terminus, the 475-residue chain is CAAX prenyl protease 1 homolog (475 aa).

The Lumenal portion of the chain corresponds to 1-18; that stretch reads MGMWASLDALWEMPAEKR. A helical transmembrane segment spans residues 19–39; it reads IFGAVLLFSWTVYLWETFLAQ. Topologically, residues 40-81 are nuclear; sequence RQRRIYKTTTHVPPELGQIMDSETFEKSRLYQLDKSTFSFWS. The chain crosses the membrane as a helical span at residues 82–102; it reads GLYSETEGTLILLFGGIPYLW. Topologically, residues 103-123 are lumenal; that stretch reads RLSGRFCGYAGFGPEYEITQS. A helical transmembrane segment spans residues 124–144; sequence LVFLLLATLFSALTGLPWSLY. Topologically, residues 145–170 are nuclear; the sequence is NTFVIEEKHGFNQQTLGFFMKDAIKK. The helical transmembrane segment at 171-191 threads the bilayer; the sequence is FVVTQCILLPVSSLLLYIIKI. At 192 to 195 the chain is on the lumenal side; the sequence is GGDY. A helical transmembrane segment spans residues 196-216; it reads FFIYAWLFTLVVSLVLVTIYA. The Nuclear segment spans residues 217 to 347; that stretch reads DYIAPLFDKF…GHWKLGHTVK (131 aa). Residue histidine 335 participates in Zn(2+) binding. Glutamate 336 is a catalytic residue. Histidine 339 provides a ligand contact to Zn(2+). Residues 348–368 traverse the membrane as a helical segment; sequence NIIISQMNSFLCFFLFAVLIG. The Lumenal portion of the chain corresponds to 369 to 382; it reads RKELFAAFGFYDSQ. The helical transmembrane segment at 383-405 threads the bilayer; it reads PTLIGLLIIFQFIFSPYNEVLSF. Over 406-475 the chain is Nuclear; that stretch reads CLTVLSRRFE…LQALKTMKQH (70 aa). Glutamate 415 is a binding site for Zn(2+).

It belongs to the peptidase M48A family. Zn(2+) serves as cofactor. In terms of tissue distribution, widely expressed. High levels in kidney, prostate, testis and ovary.

It is found in the endoplasmic reticulum membrane. The protein resides in the nucleus inner membrane. Its subcellular location is the early endosome membrane. The protein localises to the late endosome membrane. It catalyses the reaction Hydrolyzes the peptide bond -P2-(S-farnesyl or geranylgeranyl)C-P1'-P2'-P3'-COOH where P1' and P2' are amino acids with aliphatic side chains and P3' is any C-terminal residue.. Functionally, transmembrane metalloprotease whose catalytic activity is critical for processing lamin A/LMNA on the inner nuclear membrane and clearing clogged translocons on the endoplasmic reticulum. Proteolytically removes the C-terminal three residues of farnesylated proteins. Also plays an antiviral role independently of its protease activity by restricting enveloped RNA and DNA viruses, including influenza A, Zika, Ebola, Sindbis, vesicular stomatitis, cowpox, and vaccinia. Mechanistically, controls IFITM antiviral pathway to hinder viruses from breaching the endosomal barrier by modulating membrane fluidity. The polypeptide is CAAX prenyl protease 1 homolog (Homo sapiens (Human)).